The chain runs to 143 residues: 3-hydroxyacyl-[acyl-carrier-protein] dehydratase FabZ (143 aa).

H49 is an active-site residue.

The protein belongs to the thioester dehydratase family. FabZ subfamily.

The protein localises to the cytoplasm. It carries out the reaction a (3R)-hydroxyacyl-[ACP] = a (2E)-enoyl-[ACP] + H2O. Functionally, involved in unsaturated fatty acids biosynthesis. Catalyzes the dehydration of short chain beta-hydroxyacyl-ACPs and long chain saturated and unsaturated beta-hydroxyacyl-ACPs. The chain is 3-hydroxyacyl-[acyl-carrier-protein] dehydratase FabZ from Wolbachia pipientis wMel.